We begin with the raw amino-acid sequence, 394 residues long: Elongation factor Tu (394 aa).

Positions 10–204 (KPHINVGTIG…ALDKYIPEPQ (195 aa)) constitute a tr-type G domain. The segment at 19–26 (GHVDHGKT) is G1. 19–26 (GHVDHGKT) provides a ligand contact to GTP. Residue threonine 26 coordinates Mg(2+). The G2 stretch occupies residues 60–64 (GITIN). The segment at 81-84 (DCPG) is G3. GTP-binding positions include 81-85 (DCPGH) and 136-139 (NKCD). Residues 136–139 (NKCD) form a G4 region. Positions 174–176 (SAL) are G5.

This sequence belongs to the TRAFAC class translation factor GTPase superfamily. Classic translation factor GTPase family. EF-Tu/EF-1A subfamily. Monomer.

The protein resides in the cytoplasm. It carries out the reaction GTP + H2O = GDP + phosphate + H(+). Functionally, GTP hydrolase that promotes the GTP-dependent binding of aminoacyl-tRNA to the A-site of ribosomes during protein biosynthesis. In Hamiltonella defensa subsp. Acyrthosiphon pisum (strain 5AT), this protein is Elongation factor Tu.